Here is a 354-residue protein sequence, read N- to C-terminus: Anthranilate phosphoribosyltransferase (354 aa).

5-phospho-alpha-D-ribose 1-diphosphate is bound by residues G94, 97–98 (GD), T102, 104–107 (NIST), 122–130 (KHGNRAASS), and S134. Residue G94 coordinates anthranilate. Residue S106 participates in Mg(2+) binding. An anthranilate-binding site is contributed by N125. R180 serves as a coordination point for anthranilate. The Mg(2+) site is built by D238 and E239.

Belongs to the anthranilate phosphoribosyltransferase family. As to quaternary structure, homodimer. The cofactor is Mg(2+).

It carries out the reaction N-(5-phospho-beta-D-ribosyl)anthranilate + diphosphate = 5-phospho-alpha-D-ribose 1-diphosphate + anthranilate. It functions in the pathway amino-acid biosynthesis; L-tryptophan biosynthesis; L-tryptophan from chorismate: step 2/5. Its function is as follows. Catalyzes the transfer of the phosphoribosyl group of 5-phosphorylribose-1-pyrophosphate (PRPP) to anthranilate to yield N-(5'-phosphoribosyl)-anthranilate (PRA). The polypeptide is Anthranilate phosphoribosyltransferase (Streptomyces avermitilis (strain ATCC 31267 / DSM 46492 / JCM 5070 / NBRC 14893 / NCIMB 12804 / NRRL 8165 / MA-4680)).